A 113-amino-acid chain; its full sequence is Hydrogenase maturation factor HypA (113 aa).

Position 2 (His-2) interacts with Ni(2+). 4 residues coordinate Zn(2+): Cys-73, Cys-75, Cys-89, and Cys-92.

It belongs to the HypA/HybF family.

Functionally, involved in the maturation of [NiFe] hydrogenases. Required for nickel insertion into the metal center of the hydrogenase. The protein is Hydrogenase maturation factor HypA of Methanocella arvoryzae (strain DSM 22066 / NBRC 105507 / MRE50).